Here is a 341-residue protein sequence, read N- to C-terminus: Fructose-1,6-bisphosphatase class 1 1 (341 aa).

The Mg(2+) site is built by glutamate 92, aspartate 114, leucine 116, and aspartate 117. Residues 117 to 120 (DGSS), asparagine 209, and lysine 275 contribute to the substrate site. Glutamate 281 is a binding site for Mg(2+).

This sequence belongs to the FBPase class 1 family. In terms of assembly, homotetramer. It depends on Mg(2+) as a cofactor.

Its subcellular location is the cytoplasm. It carries out the reaction beta-D-fructose 1,6-bisphosphate + H2O = beta-D-fructose 6-phosphate + phosphate. Its pathway is carbohydrate biosynthesis; gluconeogenesis. The protein is Fructose-1,6-bisphosphatase class 1 1 of Leptothrix cholodnii (strain ATCC 51168 / LMG 8142 / SP-6) (Leptothrix discophora (strain SP-6)).